The chain runs to 54 residues: Ovomucoid (54 aa).

The region spanning 4–54 (VDCSDYPKPVCPLDYMPLCGSDSKTYSNKCNFCNAVVESSGTLTLRHFGKC) is the Kazal-like domain. Cystine bridges form between Cys6–Cys36, Cys14–Cys33, and Cys22–Cys54.

This is the only ovomucoid third domain known to be not glycosylated.

It localises to the secreted. In Struthio camelus (Common ostrich), this protein is Ovomucoid.